Here is a 179-residue protein sequence, read N- to C-terminus: Large ribosomal subunit protein uL5 (179 aa).

Belongs to the universal ribosomal protein uL5 family. As to quaternary structure, part of the 50S ribosomal subunit; part of the 5S rRNA/L5/L18/L25 subcomplex. Contacts the 5S rRNA and the P site tRNA. Forms a bridge to the 30S subunit in the 70S ribosome.

This is one of the proteins that bind and probably mediate the attachment of the 5S RNA into the large ribosomal subunit, where it forms part of the central protuberance. In the 70S ribosome it contacts protein S13 of the 30S subunit (bridge B1b), connecting the 2 subunits; this bridge is implicated in subunit movement. Contacts the P site tRNA; the 5S rRNA and some of its associated proteins might help stabilize positioning of ribosome-bound tRNAs. The protein is Large ribosomal subunit protein uL5 of Bacillus cereus (strain 03BB102).